We begin with the raw amino-acid sequence, 518 residues long: Voltage-gated potassium channel regulatory subunit KCNG2 (518 aa).

Residues 1–214 (MALLTGNADR…DMVENPHSGI (214 aa)) are Cytoplasmic-facing. A helical membrane pass occupies residues 215–236 (PGKIFACISISFVAITAVSLCI). The Extracellular portion of the chain corresponds to 237–257 (STMPDVREEEDRGECSQKCYD). Residues 258-279 (IFVLETVCVAWFSFEFLLRSIQ) traverse the membrane as a helical segment. Over 280–290 (AENKCAFLKTP) the chain is Cytoplasmic. Residues 291–311 (LNIIDILAILPFYISLIVDMA) traverse the membrane as a helical segment. Topologically, residues 312–331 (STKNSSKPGGGAGNKYLERV) are extracellular. A helical; Voltage-sensor transmembrane segment spans residues 332–352 (GLVLRFLRALRILYVMRLARH). Residues 353–367 (SLGLQTLGLTVRRCT) are Cytoplasmic-facing. Residues 368–389 (REFGLLLLFLCVAMALFSPLVY) traverse the membrane as a helical segment. Residues 390 to 404 (LAESELGAKQEFTSI) are Extracellular-facing. Positions 405 to 416 (PTSYWWAVISMT) form an intramembrane region, helical. A Selectivity filter motif is present at residues 417 to 422 (TVGYGD). The stretch at 417 to 424 (TVGYGDMV) is an intramembrane region. The Extracellular segment spans residues 425–431 (PRSIPGQ). A helical membrane pass occupies residues 432-460 (VVALSSILSGILLMAFPVTSIFHTFSRSY). Over 461 to 518 (SELKEQQQRAASRQMHQLEESTKLAGGGSSQWITAASPPDAAREDGRPELDQEAKRSC) the chain is Cytoplasmic. Positions 473 to 518 (RQMHQLEESTKLAGGGSSQWITAASPPDAAREDGRPELDQEAKRSC) are disordered. Basic and acidic residues predominate over residues 501–518 (AAREDGRPELDQEAKRSC).

This sequence belongs to the potassium channel family. G (TC 1.A.1.2) subfamily. Kv6.2/KCNG2 sub-subfamily. As to quaternary structure, heterodimer with KCNB1.

It is found in the cell membrane. Regulatory alpha-subunit of the voltage-gated potassium (Kv) channel which, when coassembled with KCNB1, can modulate the kinetics and conductance-voltage relationship. Modulates channel activity by shifting the threshold and the half-maximal activation to more negative values. Potassium channel subunit that does not form functional channels by itself. This Gallus gallus (Chicken) protein is Voltage-gated potassium channel regulatory subunit KCNG2.